The chain runs to 97 residues: U6-theraphotoxin-Hhn1a 1 (97 aa).

The first 33 residues, 1-33 (MLIKQFSRRSKNMKVQILLAFAALFVLAVGSYA), serve as a signal peptide directing secretion. A propeptide spanning residues 34 to 61 (SESKKLDLRDALFSAMFSADYQLNPQER) is cleaved from the precursor. 3 cysteine pairs are disulfide-bonded: Cys63–Cys77, Cys70–Cys82, and Cys76–Cys89.

It belongs to the neurotoxin 10 (Hwtx-1) family. 12 (Hntx-12) subfamily. In terms of tissue distribution, expressed by the venom gland.

The protein localises to the secreted. In terms of biological role, ion channel inhibitor. This is U6-theraphotoxin-Hhn1a 1 from Cyriopagopus hainanus (Chinese bird spider).